The primary structure comprises 251 residues: Sugar fermentation stimulation protein homolog (251 aa).

It belongs to the SfsA family.

In Yersinia pseudotuberculosis serotype O:1b (strain IP 31758), this protein is Sugar fermentation stimulation protein homolog.